The sequence spans 342 residues: Dihydroorotase (342 aa).

Zn(2+) is bound by residues His13 and His15. Substrate contacts are provided by residues 15–17 (HLR) and Asn41. Residues Lys98, His135, and His173 each contribute to the Zn(2+) site. Lys98 carries the post-translational modification N6-carboxylysine. Position 135 (His135) interacts with substrate. Leu218 provides a ligand contact to substrate. Residue Asp246 coordinates Zn(2+). The active site involves Asp246. Residues His250 and Ala262 each coordinate substrate.

It belongs to the metallo-dependent hydrolases superfamily. DHOase family. Class II DHOase subfamily. Homodimer. Requires Zn(2+) as cofactor.

It catalyses the reaction (S)-dihydroorotate + H2O = N-carbamoyl-L-aspartate + H(+). The protein operates within pyrimidine metabolism; UMP biosynthesis via de novo pathway; (S)-dihydroorotate from bicarbonate: step 3/3. Its function is as follows. Catalyzes the reversible cyclization of carbamoyl aspartate to dihydroorotate. This is Dihydroorotase from Vibrio cholerae serotype O1 (strain ATCC 39315 / El Tor Inaba N16961).